Reading from the N-terminus, the 405-residue chain is Aspartokinase (405 aa).

ACT domains lie at 267–344 (VSME…AKVS) and 345–405 (IVGV…QLDQ).

Belongs to the aspartokinase family.

It catalyses the reaction L-aspartate + ATP = 4-phospho-L-aspartate + ADP. It functions in the pathway amino-acid biosynthesis; L-lysine biosynthesis via DAP pathway; (S)-tetrahydrodipicolinate from L-aspartate: step 1/4. It participates in amino-acid biosynthesis; L-methionine biosynthesis via de novo pathway; L-homoserine from L-aspartate: step 1/3. Its pathway is amino-acid biosynthesis; L-threonine biosynthesis; L-threonine from L-aspartate: step 1/5. The polypeptide is Aspartokinase (lysC) (Helicobacter pylori (strain ATCC 700392 / 26695) (Campylobacter pylori)).